The primary structure comprises 390 residues: Argininosuccinate synthase (390 aa).

Position 6–14 (6–14) interacts with ATP; that stretch reads AYSGGLDTT. Position 84 (tyrosine 84) interacts with L-citrulline. An ATP-binding site is contributed by glycine 114. Positions 116, 120, and 121 each coordinate L-aspartate. L-citrulline is bound at residue asparagine 120. Arginine 124, serine 171, serine 180, glutamate 253, and tyrosine 265 together coordinate L-citrulline.

It belongs to the argininosuccinate synthase family. Type 1 subfamily. As to quaternary structure, homotetramer.

It is found in the cytoplasm. It carries out the reaction L-citrulline + L-aspartate + ATP = 2-(N(omega)-L-arginino)succinate + AMP + diphosphate + H(+). Its pathway is amino-acid biosynthesis; L-arginine biosynthesis; L-arginine from L-ornithine and carbamoyl phosphate: step 2/3. The polypeptide is Argininosuccinate synthase (Sulfurisphaera tokodaii (strain DSM 16993 / JCM 10545 / NBRC 100140 / 7) (Sulfolobus tokodaii)).